We begin with the raw amino-acid sequence, 432 residues long: Adenylosuccinate synthetase (432 aa).

Residues 13–19 (GDEGKGK) and 41–43 (GHT) contribute to the GTP site. Asp-14 acts as the Proton acceptor in catalysis. Mg(2+)-binding residues include Asp-14 and Gly-41. Residues 14–17 (DEGK), 39–42 (NAGH), Thr-131, Arg-145, Gln-226, Thr-241, and Arg-305 contribute to the IMP site. The active-site Proton donor is His-42. 301–307 (SVTGRAR) lines the substrate pocket. GTP-binding positions include Arg-307, 333–335 (KLD), and 416–418 (STG).

The protein belongs to the adenylosuccinate synthetase family. Homodimer. It depends on Mg(2+) as a cofactor.

Its subcellular location is the cytoplasm. The catalysed reaction is IMP + L-aspartate + GTP = N(6)-(1,2-dicarboxyethyl)-AMP + GDP + phosphate + 2 H(+). It functions in the pathway purine metabolism; AMP biosynthesis via de novo pathway; AMP from IMP: step 1/2. Functionally, plays an important role in the de novo pathway of purine nucleotide biosynthesis. Catalyzes the first committed step in the biosynthesis of AMP from IMP. The sequence is that of Adenylosuccinate synthetase from Neisseria gonorrhoeae (strain ATCC 700825 / FA 1090).